The following is a 431-amino-acid chain: Glutamate-1-semialdehyde 2,1-aminomutase (431 aa).

Lys264 is subject to N6-(pyridoxal phosphate)lysine.

Belongs to the class-III pyridoxal-phosphate-dependent aminotransferase family. HemL subfamily. As to quaternary structure, homodimer. Requires pyridoxal 5'-phosphate as cofactor.

The protein localises to the cytoplasm. The enzyme catalyses (S)-4-amino-5-oxopentanoate = 5-aminolevulinate. Its pathway is porphyrin-containing compound metabolism; protoporphyrin-IX biosynthesis; 5-aminolevulinate from L-glutamyl-tRNA(Glu): step 2/2. This is Glutamate-1-semialdehyde 2,1-aminomutase from Clostridium beijerinckii (strain ATCC 51743 / NCIMB 8052) (Clostridium acetobutylicum).